Reading from the N-terminus, the 369-residue chain is mRNA cap guanine-N(7) methyltransferase 1 (369 aa).

Residues 1 to 55 form a disordered region; it reads MNKRPRDEPSSSFASAPKRQYGAGGGGYGGHGYSEERSSARRVADHYSARSNQTL. The segment covering 22 to 32 has biased composition (gly residues); the sequence is GAGGGGYGGHG. The segment covering 33 to 48 has biased composition (basic and acidic residues); that stretch reads YSEERSSARRVADHYS. The 280-residue stretch at 61–340 folds into the mRNA cap 0 methyltransferase domain; that stretch reads SPIIHLKKLN…LYLAFVLRKR (280 aa). 70-71 contributes to the mRNA binding site; sequence NN. S-adenosyl-L-methionine is bound by residues Lys-74, Ala-92, Asp-114, 149–150, and 171–173; these read DC and QFA.

Belongs to the class I-like SAM-binding methyltransferase superfamily. mRNA cap 0 methyltransferase family.

It is found in the nucleus. It catalyses the reaction a 5'-end (5'-triphosphoguanosine)-ribonucleoside in mRNA + S-adenosyl-L-methionine = a 5'-end (N(7)-methyl 5'-triphosphoguanosine)-ribonucleoside in mRNA + S-adenosyl-L-homocysteine. Its function is as follows. mRNA-capping methyltransferase that methylates the N7 position of the added guanosine to the 5'-cap structure of mRNAs. Binds RNA containing 5'-terminal GpppC. This is mRNA cap guanine-N(7) methyltransferase 1 from Oryza sativa subsp. japonica (Rice).